A 119-amino-acid polypeptide reads, in one-letter code: Ghilanten (119 aa).

Glutamine 1 carries the post-translational modification Pyrrolidone carboxylic acid. 10 cysteine pairs are disulfide-bonded: cysteine 8-cysteine 19, cysteine 13-cysteine 26, cysteine 28-cysteine 48, cysteine 33-cysteine 51, cysteine 37-cysteine 53, cysteine 62-cysteine 73, cysteine 67-cysteine 80, cysteine 82-cysteine 103, cysteine 88-cysteine 106, and cysteine 92-cysteine 108. In terms of domain architecture, Antistasin-like 1 spans 28 to 53 (CPEVRCRVYCSHGFQRSRYGCEVCRC). Residues 83 to 108 (KIDINCRKTCPNGLKRDKLGCEYCEC) enclose the Antistasin-like 2 domain. Heparin is bound by residues 97–100 (KRDK) and 111–118 (KRKLVPRL).

The protein belongs to the protease inhibitor I15 (antistasin) family.

It is found in the secreted. Functionally, this highly disulfide-bonded protein is a potent inhibitor of factor Xa. May have therapeutic utility as an anticoagulant. Also exhibits a strong metastatic activity. The polypeptide is Ghilanten (Haementeria ghilianii (Amazon leech)).